A 170-amino-acid chain; its full sequence is Phosphopantetheine adenylyltransferase (170 aa).

Residue threonine 14 coordinates substrate. ATP contacts are provided by residues 14–15 (TF) and histidine 22. 3 residues coordinate substrate: lysine 46, leucine 78, and arginine 92. Residues 93-95 (GLR), glutamate 103, and 128-134 (WLYISST) contribute to the ATP site.

It belongs to the bacterial CoaD family. Homohexamer. Mg(2+) is required as a cofactor.

Its subcellular location is the cytoplasm. The catalysed reaction is (R)-4'-phosphopantetheine + ATP + H(+) = 3'-dephospho-CoA + diphosphate. Its pathway is cofactor biosynthesis; coenzyme A biosynthesis; CoA from (R)-pantothenate: step 4/5. In terms of biological role, reversibly transfers an adenylyl group from ATP to 4'-phosphopantetheine, yielding dephospho-CoA (dPCoA) and pyrophosphate. The sequence is that of Phosphopantetheine adenylyltransferase from Oleidesulfovibrio alaskensis (strain ATCC BAA-1058 / DSM 17464 / G20) (Desulfovibrio alaskensis).